The primary structure comprises 645 residues: Translation factor GUF1 homolog, mitochondrial (645 aa).

The tr-type G domain occupies 40-215 (EKIRNFGIVA…AIVERVPAPT (176 aa)). Residues 49–56 (AHVDHGKS), 108–112 (DTPGH), and 162–165 (NKID) each bind GTP.

Belongs to the TRAFAC class translation factor GTPase superfamily. Classic translation factor GTPase family. LepA subfamily.

Its subcellular location is the mitochondrion inner membrane. It carries out the reaction GTP + H2O = GDP + phosphate + H(+). Its function is as follows. Promotes mitochondrial protein synthesis. May act as a fidelity factor of the translation reaction, by catalyzing a one-codon backward translocation of tRNAs on improperly translocated ribosomes. Binds to mitochondrial ribosomes in a GTP-dependent manner. The protein is Translation factor GUF1 homolog, mitochondrial of Caenorhabditis briggsae.